Here is a 289-residue protein sequence, read N- to C-terminus: 3-methyl-2-oxobutanoate hydroxymethyltransferase (289 aa).

The span at 1–10 (MSDSKSSAST) shows a compositional bias: low complexity. The interval 1-33 (MSDSKSSASTSEDRLYGSAPSHDVPKRKTRTHH) is disordered. Mg(2+) contacts are provided by aspartate 70 and aspartate 109. 3-methyl-2-oxobutanoate contacts are provided by residues 70 to 71 (DS), aspartate 109, and lysine 139. Glutamate 141 is a Mg(2+) binding site. Glutamate 207 serves as the catalytic Proton acceptor.

This sequence belongs to the PanB family. In terms of assembly, homodecamer; pentamer of dimers. It depends on Mg(2+) as a cofactor.

It localises to the cytoplasm. The catalysed reaction is 3-methyl-2-oxobutanoate + (6R)-5,10-methylene-5,6,7,8-tetrahydrofolate + H2O = 2-dehydropantoate + (6S)-5,6,7,8-tetrahydrofolate. Its pathway is cofactor biosynthesis; (R)-pantothenate biosynthesis; (R)-pantoate from 3-methyl-2-oxobutanoate: step 1/2. Its function is as follows. Catalyzes the reversible reaction in which hydroxymethyl group from 5,10-methylenetetrahydrofolate is transferred onto alpha-ketoisovalerate to form ketopantoate. This Rhodococcus jostii (strain RHA1) protein is 3-methyl-2-oxobutanoate hydroxymethyltransferase.